The primary structure comprises 113 residues: Putative pterin-4-alpha-carbinolamine dehydratase (113 aa).

The protein belongs to the pterin-4-alpha-carbinolamine dehydratase family.

It carries out the reaction (4aS,6R)-4a-hydroxy-L-erythro-5,6,7,8-tetrahydrobiopterin = (6R)-L-erythro-6,7-dihydrobiopterin + H2O. This is Putative pterin-4-alpha-carbinolamine dehydratase from Rickettsia bellii (strain OSU 85-389).